The sequence spans 145 residues: MFMGEHQHSIDPKGRLFIPARFREGLGNRFVLTKGLDGCLFAYPLPEWEALEQKLKSLPFTRGDARAFVRFFFSGAVECEADKQGRILIPLNLREYARLEKEAVIIGVSSRVEIWAKDQWEHYKGQAASSYEEIAEKIVDLNLGI.

SpoVT-AbrB domains lie at 5 to 47 (EHQH…PLPE) and 76 to 119 (AVEC…AKDQ).

This sequence belongs to the MraZ family. As to quaternary structure, forms oligomers.

Its subcellular location is the cytoplasm. The protein localises to the nucleoid. This chain is Transcriptional regulator MraZ, found in Pelotomaculum thermopropionicum (strain DSM 13744 / JCM 10971 / SI).